The following is a 145-amino-acid chain: 3-dehydroquinate dehydratase (145 aa).

The active-site Proton acceptor is Tyr24. Substrate-binding residues include Asn76, His82, and Asp89. His102 acts as the Proton donor in catalysis. Substrate contacts are provided by residues 103–104 and Arg113; that span reads VS.

This sequence belongs to the type-II 3-dehydroquinase family. In terms of assembly, homododecamer.

The catalysed reaction is 3-dehydroquinate = 3-dehydroshikimate + H2O. It functions in the pathway metabolic intermediate biosynthesis; chorismate biosynthesis; chorismate from D-erythrose 4-phosphate and phosphoenolpyruvate: step 3/7. Functionally, catalyzes a trans-dehydration via an enolate intermediate. This Janthinobacterium sp. (strain Marseille) (Minibacterium massiliensis) protein is 3-dehydroquinate dehydratase.